A 326-amino-acid polypeptide reads, in one-letter code: tRNA(Ile)-lysidine synthase (326 aa).

33-38 lines the ATP pocket; it reads SGGPDS.

The protein belongs to the tRNA(Ile)-lysidine synthase family.

Its subcellular location is the cytoplasm. The catalysed reaction is cytidine(34) in tRNA(Ile2) + L-lysine + ATP = lysidine(34) in tRNA(Ile2) + AMP + diphosphate + H(+). In terms of biological role, ligates lysine onto the cytidine present at position 34 of the AUA codon-specific tRNA(Ile) that contains the anticodon CAU, in an ATP-dependent manner. Cytidine is converted to lysidine, thus changing the amino acid specificity of the tRNA from methionine to isoleucine. The chain is tRNA(Ile)-lysidine synthase from Novosphingobium aromaticivorans (strain ATCC 700278 / DSM 12444 / CCUG 56034 / CIP 105152 / NBRC 16084 / F199).